Reading from the N-terminus, the 502-residue chain is Lysine--tRNA ligase (502 aa).

Glu-409 and Glu-416 together coordinate Mg(2+).

Belongs to the class-II aminoacyl-tRNA synthetase family. Homodimer. The cofactor is Mg(2+).

It is found in the cytoplasm. It catalyses the reaction tRNA(Lys) + L-lysine + ATP = L-lysyl-tRNA(Lys) + AMP + diphosphate. This Prochlorococcus marinus (strain SARG / CCMP1375 / SS120) protein is Lysine--tRNA ligase.